The primary structure comprises 357 residues: Heat-inducible transcription repressor HrcA (357 aa).

This sequence belongs to the HrcA family.

Its function is as follows. Negative regulator of class I heat shock genes (grpE-dnaK-dnaJ and groELS operons). Prevents heat-shock induction of these operons. This Chlorobium limicola (strain DSM 245 / NBRC 103803 / 6330) protein is Heat-inducible transcription repressor HrcA.